The following is an 862-amino-acid chain: Ubiquitin carboxyl-terminal hydrolase 13 (862 aa).

The UBP-type; degenerate zinc-finger motif lies at 182–290 (QASKHAKSLV…KHLAHFGIDM (109 aa)). Residues cysteine 206, cysteine 209, cysteine 226, and histidine 239 each contribute to the Zn(2+) site. The USP domain occupies 331-860 (TGMKNLGNSC…LGYIYFYHRI (530 aa)). Residue cysteine 340 is the Nucleophile of the active site. UBA domains follow at residues 647-688 (DIDE…IIAH) and 722-762 (QPPE…IFSH). Histidine 822 functions as the Proton acceptor in the catalytic mechanism.

This sequence belongs to the peptidase C19 family.

The catalysed reaction is Thiol-dependent hydrolysis of ester, thioester, amide, peptide and isopeptide bonds formed by the C-terminal Gly of ubiquitin (a 76-residue protein attached to proteins as an intracellular targeting signal).. Its activity is regulated as follows. Specifically inhibited by spautin-1 (specific and potent autophagy inhibitor-1), a derivative of MBCQ that binds to USP13 and inhibits deubiquitinase activity. Its function is as follows. Deubiquitinase that mediates deubiquitination of target proteins and is involved in various processes such as autophagy and endoplasmic reticulum-associated degradation (ERAD). The polypeptide is Ubiquitin carboxyl-terminal hydrolase 13 (USP13) (Gallus gallus (Chicken)).